Consider the following 863-residue polypeptide: Bifunctional uridylyltransferase/uridylyl-removing enzyme (863 aa).

Residues 1 to 328 are uridylyltransferase; the sequence is MLFSPTLSSP…PSNQDTVIDQ (328 aa). The uridylyl-removing stretch occupies residues 329 to 687; it reads LDDDFQLINQ…ISNRFSLGGT (359 aa). The region spanning 446–568 is the HD domain; the sequence is VDEHTLRVML…VQNQVRLDYL (123 aa). ACT domains are found at residues 688-772 and 794-863; these read EVFI…PNRQ and QMEL…RNIG.

The protein belongs to the GlnD family. The cofactor is Mg(2+).

It catalyses the reaction [protein-PII]-L-tyrosine + UTP = [protein-PII]-uridylyl-L-tyrosine + diphosphate. It carries out the reaction [protein-PII]-uridylyl-L-tyrosine + H2O = [protein-PII]-L-tyrosine + UMP + H(+). Uridylyltransferase (UTase) activity is inhibited by glutamine, while glutamine activates uridylyl-removing (UR) activity. Modifies, by uridylylation and deuridylylation, the PII regulatory proteins (GlnB and homologs), in response to the nitrogen status of the cell that GlnD senses through the glutamine level. Under low glutamine levels, catalyzes the conversion of the PII proteins and UTP to PII-UMP and PPi, while under higher glutamine levels, GlnD hydrolyzes PII-UMP to PII and UMP (deuridylylation). Thus, controls uridylylation state and activity of the PII proteins, and plays an important role in the regulation of nitrogen assimilation and metabolism. This Haemophilus influenzae (strain 86-028NP) protein is Bifunctional uridylyltransferase/uridylyl-removing enzyme.